A 408-amino-acid polypeptide reads, in one-letter code: Digeranylgeranylglycerophospholipid reductase 1 (408 aa).

A15, E34, C45, A46, G48, R99, V123, D279, G291, and I292 together coordinate FAD.

The protein belongs to the geranylgeranyl reductase family. DGGGPL reductase subfamily. FAD serves as cofactor.

It catalyses the reaction a 2,3-bis-O-phytanyl-sn-glycerol 1-phospholipid + 8 oxidized 2[4Fe-4S]-[ferredoxin] = a 2,3-bis-O-(geranylgeranyl)-sn-glycerol 1-phospholipid + 8 reduced 2[4Fe-4S]-[ferredoxin] + 16 H(+). The enzyme catalyses 2,3-bis-O-(phytanyl)-sn-glycerol 1-phosphate + 8 oxidized 2[4Fe-4S]-[ferredoxin] = 2,3-bis-O-(geranylgeranyl)-sn-glycerol 1-phosphate + 8 reduced 2[4Fe-4S]-[ferredoxin] + 16 H(+). The catalysed reaction is a 2,3-bis-O-phytanyl-sn-glycerol 1-phospholipid + 8 A = a 2,3-bis-O-(geranylgeranyl)-sn-glycerol 1-phospholipid + 8 AH2. It carries out the reaction CDP-2,3-bis-O-(geranylgeranyl)-sn-glycerol + 8 AH2 = CDP-2,3-bis-O-(phytanyl)-sn-glycerol + 8 A. It catalyses the reaction archaetidylserine + 8 AH2 = 2,3-bis-O-phytanyl-sn-glycero-3-phospho-L-serine + 8 A. It functions in the pathway membrane lipid metabolism; glycerophospholipid metabolism. In terms of biological role, is involved in the reduction of 2,3-digeranylgeranylglycerophospholipids (unsaturated archaeols) into 2,3-diphytanylglycerophospholipids (saturated archaeols) in the biosynthesis of archaeal membrane lipids. Catalyzes the formation of archaetidic acid (2,3-di-O-phytanyl-sn-glyceryl phosphate) from 2,3-di-O-geranylgeranylglyceryl phosphate (DGGGP) via the hydrogenation of each double bond of the isoprenoid chains. Is also probably able to reduce double bonds of geranyl groups in CDP-2,3-bis-O-(geranylgeranyl)-sn-glycerol and archaetidylserine, thus acting at various stages in the biosynthesis of archaeal membrane lipids. The polypeptide is Digeranylgeranylglycerophospholipid reductase 1 (Methanococcoides burtonii (strain DSM 6242 / NBRC 107633 / OCM 468 / ACE-M)).